Reading from the N-terminus, the 200-residue chain is Recombination protein RecR (200 aa).

A C4-type zinc finger spans residues 59-74 (CEKCNTFTEAQVCEVC). In terms of domain architecture, Toprim spans 82–177 (ALLCVVETPA…AVTRLARGVP (96 aa)).

This sequence belongs to the RecR family.

May play a role in DNA repair. It seems to be involved in an RecBC-independent recombinational process of DNA repair. It may act with RecF and RecO. The polypeptide is Recombination protein RecR (Burkholderia pseudomallei (strain 1106a)).